A 347-amino-acid chain; its full sequence is D-alanine--D-alanine ligase (347 aa).

The region spanning 131–333 (KRVLESAGIA…YPELIERLVD (203 aa)) is the ATP-grasp domain. ATP is bound at residue 161 to 216 (EEKLAYPVFTKPSNMGSSVGISKSENQEELRQALKLAFRYDSRVLVEQGVNAREIE). Aspartate 287, glutamate 300, and asparagine 302 together coordinate Mg(2+).

It belongs to the D-alanine--D-alanine ligase family. The cofactor is Mg(2+). Requires Mn(2+) as cofactor.

It localises to the cytoplasm. The enzyme catalyses 2 D-alanine + ATP = D-alanyl-D-alanine + ADP + phosphate + H(+). It participates in cell wall biogenesis; peptidoglycan biosynthesis. Cell wall formation. The sequence is that of D-alanine--D-alanine ligase from Streptococcus pneumoniae (strain ATCC BAA-255 / R6).